The chain runs to 145 residues: Ribosome-binding factor A (145 aa).

Residues 1-10 (MKRPSSHGRR) show a composition bias toward basic residues. Disordered stretches follow at residues 1 to 21 (MKRPSSHGRRPPQGPSQRQLR) and 124 to 145 (DDPKVRQDLTPQPPSDSWKDED).

This sequence belongs to the RbfA family. Monomer. Binds 30S ribosomal subunits, but not 50S ribosomal subunits or 70S ribosomes.

The protein localises to the cytoplasm. In terms of biological role, one of several proteins that assist in the late maturation steps of the functional core of the 30S ribosomal subunit. Associates with free 30S ribosomal subunits (but not with 30S subunits that are part of 70S ribosomes or polysomes). Required for efficient processing of 16S rRNA. May interact with the 5'-terminal helix region of 16S rRNA. The sequence is that of Ribosome-binding factor A from Phenylobacterium zucineum (strain HLK1).